Here is a 159-residue protein sequence, read N- to C-terminus: Ribose-5-phosphate isomerase B (159 aa).

D-ribulose 5-phosphate is bound by residues 8–9 and 67–71; these read DH and GSGNG. Glutamate 72 acts as the Proton acceptor in catalysis. Residue histidine 99 is the Proton donor of the active site. 4 residues coordinate D-ribulose 5-phosphate: asparagine 100, arginine 110, arginine 134, and arginine 138.

It belongs to the LacAB/RpiB family. Homodimer.

The catalysed reaction is aldehydo-D-ribose 5-phosphate = D-ribulose 5-phosphate. It participates in carbohydrate degradation; pentose phosphate pathway; D-ribose 5-phosphate from D-ribulose 5-phosphate (non-oxidative stage): step 1/1. Catalyzes the interconversion of ribulose-5-P and ribose-5-P. This chain is Ribose-5-phosphate isomerase B, found in Mycolicibacterium paratuberculosis (strain ATCC BAA-968 / K-10) (Mycobacterium paratuberculosis).